A 98-amino-acid chain; its full sequence is EVQLVESGGGLVKPGGSLKLSCAASGFTFSDYYMYWVRQTPEKRLEWVATISDGGSYTYYPDSVKGRFTISRDNAKNNLYLQMSSLKSEDTAMYYCAR.

In terms of domain architecture, Ig-like spans 1-98 (EVQLVESGGG…EDTAMYYCAR (98 aa)).

In Mus musculus (Mouse), this protein is Ig heavy chain V region 6.96.